The following is a 307-amino-acid chain: Nucleotide-binding protein Arth_2083 (307 aa).

30–37 (GMSGAGRS) contacts ATP. 81–84 (DVRS) provides a ligand contact to GTP.

This sequence belongs to the RapZ-like family.

Its function is as follows. Displays ATPase and GTPase activities. In Arthrobacter sp. (strain FB24), this protein is Nucleotide-binding protein Arth_2083.